Consider the following 274-residue polypeptide: MAVIKCKPTSPGRRHVVKVVNTDLHKGKPFAGLLAKKSKSGGRNNTGRITVRHVGGGHKQHYRLIDFKRDKDGIPAKIERLEYDPNRTANIALVLYADGERRYILAAKGMQAGDKIQSGVEAEIKTGNAMPLRNIPVGSVVHAVEMKPGKGAQIARSAGAYVQVVARDGAYATLRLRSGEMRKVPVDCRATFGEVGNAEHMLRQLGKAGAKRWRGIRPTVRGVAMNPVDHPHGGGEGRTSGGRHPVTPWGVPTKGYKTRSNKRTDKYIVRRRNK.

The interval 223–274 is disordered; it reads VAMNPVDHPHGGGEGRTSGGRHPVTPWGVPTKGYKTRSNKRTDKYIVRRRNK.

The protein belongs to the universal ribosomal protein uL2 family. Part of the 50S ribosomal subunit. Forms a bridge to the 30S subunit in the 70S ribosome.

In terms of biological role, one of the primary rRNA binding proteins. Required for association of the 30S and 50S subunits to form the 70S ribosome, for tRNA binding and peptide bond formation. It has been suggested to have peptidyltransferase activity; this is somewhat controversial. Makes several contacts with the 16S rRNA in the 70S ribosome. This is Large ribosomal subunit protein uL2 from Shewanella putrefaciens (strain CN-32 / ATCC BAA-453).